The following is a 497-amino-acid chain: Ganglioside-induced differentiation-associated protein 2 (497 aa).

The Macro domain occupies 43–223 (RSPFLYNKDV…TYQKLLPLYF (181 aa)). The interval 252-273 (ERQIRISEKPGAPEDNQEEEDE) is disordered. Positions 253 to 263 (RQIRISEKPGA) are enriched in basic and acidic residues. Phosphoserine is present on serine 280. One can recognise a CRAL-TRIO domain in the interval 333-481 (DIASLKALYQ…FPPFVLEYDA (149 aa)).

It belongs to the GDAP2 family.

The sequence is that of Ganglioside-induced differentiation-associated protein 2 (GDAP2) from Homo sapiens (Human).